A 322-amino-acid polypeptide reads, in one-letter code: Endochitinase CH25 (322 aa).

Positions 1–20 (MKSCLLLFLIFSFLLSFSLA) are cleaved as a signal peptide. A Chitin-binding type-1 domain is found at 21-62 (EQCGRQAGGALCPNGLCCSEFGWCGDTEAYCKQPGCQSQCGG). Cystine bridges form between cysteine 23/cysteine 38, cysteine 32/cysteine 44, cysteine 37/cysteine 51, cysteine 56/cysteine 60, cysteine 92/cysteine 154, cysteine 166/cysteine 174, and cysteine 273/cysteine 305. Glutamate 136 serves as the catalytic Proton donor.

It belongs to the glycosyl hydrolase 19 family. Chitinase class I subfamily. In terms of tissue distribution, high expression in roots, moderate in floral tissues and low in stems and leaves.

It catalyses the reaction Random endo-hydrolysis of N-acetyl-beta-D-glucosaminide (1-&gt;4)-beta-linkages in chitin and chitodextrins.. The sequence is that of Endochitinase CH25 from Brassica napus (Rape).